Reading from the N-terminus, the 364-residue chain is Chaperone protein DnaJ (364 aa).

In terms of domain architecture, J spans aspartate 5–glycine 71. The CR-type zinc finger occupies glycine 127–glutamine 205. Zn(2+) is bound by residues cysteine 140, cysteine 143, cysteine 157, cysteine 160, cysteine 179, cysteine 182, cysteine 193, and cysteine 196. 4 CXXCXGXG motif repeats span residues cysteine 140 to glycine 147, cysteine 157 to glycine 164, cysteine 179 to glycine 186, and cysteine 193 to glycine 200.

This sequence belongs to the DnaJ family. In terms of assembly, homodimer. The cofactor is Zn(2+).

The protein localises to the cytoplasm. Functionally, participates actively in the response to hyperosmotic and heat shock by preventing the aggregation of stress-denatured proteins and by disaggregating proteins, also in an autonomous, DnaK-independent fashion. Unfolded proteins bind initially to DnaJ; upon interaction with the DnaJ-bound protein, DnaK hydrolyzes its bound ATP, resulting in the formation of a stable complex. GrpE releases ADP from DnaK; ATP binding to DnaK triggers the release of the substrate protein, thus completing the reaction cycle. Several rounds of ATP-dependent interactions between DnaJ, DnaK and GrpE are required for fully efficient folding. Also involved, together with DnaK and GrpE, in the DNA replication of plasmids through activation of initiation proteins. This Ruthia magnifica subsp. Calyptogena magnifica protein is Chaperone protein DnaJ.